The sequence spans 392 residues: 3-ketoacyl-CoA thiolase (392 aa).

The active-site Acyl-thioester intermediate is the Cys-95. Active-site proton acceptor residues include His-347 and Cys-377.

The protein belongs to the thiolase-like superfamily. Thiolase family. As to quaternary structure, heterotetramer of two alpha chains (FadB) and two beta chains (FadA).

Its subcellular location is the cytoplasm. It catalyses the reaction an acyl-CoA + acetyl-CoA = a 3-oxoacyl-CoA + CoA. It functions in the pathway lipid metabolism; fatty acid beta-oxidation. Catalyzes the final step of fatty acid oxidation in which acetyl-CoA is released and the CoA ester of a fatty acid two carbons shorter is formed. The chain is 3-ketoacyl-CoA thiolase from Chromohalobacter salexigens (strain ATCC BAA-138 / DSM 3043 / CIP 106854 / NCIMB 13768 / 1H11).